Reading from the N-terminus, the 345-residue chain is Olfactory receptor 11G2 (345 aa).

At 1 to 62 (MHFLSQNDLN…LGFPCPREGQ (62 aa)) the chain is on the extracellular side. An N-linked (GlcNAc...) asparagine glycan is attached at Asn43. The chain crosses the membrane as a helical span at residues 63 to 83 (ILLFVLFTVVYLLTLMGNGSI). At 84-92 (ICAVHWDQR) the chain is on the cytoplasmic side. The chain crosses the membrane as a helical span at residues 93 to 113 (LHAPMYILLANFSFLEICYVT). At 114–135 (STVPSMLANFLSDTKIISFSGC) the chain is on the extracellular side. The cysteines at positions 135 and 217 are disulfide-linked. The chain crosses the membrane as a helical span at residues 136-156 (FLQFYFFFSLGSTECFFLAVM). Residues 157 to 181 (AFDRYLAICRPLRYPTIMTRRLCTN) lie on the Cytoplasmic side of the membrane. The chain crosses the membrane as a helical span at residues 182 to 202 (LVVNCWVLGFIWFLIPIVNIS). The Extracellular portion of the chain corresponds to 203–241 (QMSFCGSRIIDHFLCDPAPLLTLTCKKGPVIELVFSVLS). Residues 242-264 (PLPVFMLFLFIVGSYALVVRAVL) traverse the membrane as a helical segment. Over 265–275 (RVPSAAGRRKA) the chain is Cytoplasmic. Residues 276–296 (FSTCGSHLAVVSLFYGSVLVM) traverse the membrane as a helical segment. At 297-309 (YGSPPSKNEAGKQ) the chain is on the extracellular side. Residues 310-330 (KTVTLFYSVVTPLLNPVIYSL) form a helical membrane-spanning segment. Topologically, residues 331-345 (RNKDMRKALKKFWGT) are cytoplasmic.

Belongs to the G-protein coupled receptor 1 family.

It localises to the cell membrane. Its function is as follows. Odorant receptor. This Homo sapiens (Human) protein is Olfactory receptor 11G2 (OR11G2).